The chain runs to 569 residues: S-(+)-linalool synthase, chloroplastic (569 aa).

Residues methionine 1 to proline 39 constitute a chloroplast transit peptide. (2E)-geranyl diphosphate is bound by residues arginine 294, aspartate 331, aspartate 335, arginine 472, and aspartate 475. Aspartate 331 and aspartate 335 together coordinate Mg(2+). The DDXXD motif motif lies at aspartate 331–aspartate 335. Mg(2+)-binding residues include aspartate 475, serine 479, and glutamate 483.

The protein belongs to the terpene synthase family. Tpsb subfamily. The cofactor is Mg(2+). Mn(2+) is required as a cofactor. Predominantly expressed in flowers but also in stems and siliques.

The protein localises to the plastid. It is found in the chloroplast. The catalysed reaction is (2E)-geranyl diphosphate + H2O = (S)-linalool + diphosphate. The protein operates within secondary metabolite biosynthesis; terpenoid biosynthesis. Its function is as follows. Involved in monoterpene (C10) biosynthesis. The major product is (S)-linalool. This chain is S-(+)-linalool synthase, chloroplastic, found in Arabidopsis thaliana (Mouse-ear cress).